We begin with the raw amino-acid sequence, 461 residues long: Homocitrate synthase (461 aa).

The Pyruvate carboxyltransferase domain maps to 4 to 259 (VGILDSTLRE…IEVVKLDKLQ (256 aa)). Residue R12 coordinates 2-oxoglutarate. E13 provides a ligand contact to Mg(2+). Residues H76, R136, and T170 each contribute to the 2-oxoglutarate site. Mg(2+)-binding residues include H198 and H200. H292 functions as the Proton acceptor in the catalytic mechanism.

It belongs to the alpha-IPM synthase/homocitrate synthase family. Homocitrate synthase LYS20/LYS21 subfamily. It depends on Mg(2+) as a cofactor. The cofactor is Mn(2+).

It carries out the reaction acetyl-CoA + 2-oxoglutarate + H2O = (2R)-homocitrate + CoA + H(+). It participates in amino-acid biosynthesis; L-lysine biosynthesis via AAA pathway; L-alpha-aminoadipate from 2-oxoglutarate: step 1/5. In terms of biological role, catalyzes the aldol-type condensation of 2-oxoglutarate with acetyl-CoA to yield homocitrate. Carries out the first step of the alpha-aminoadipate (AAA) lysine biosynthesis pathway. This chain is Homocitrate synthase, found in Saccharolobus islandicus (strain Y.N.15.51 / Yellowstone #2) (Sulfolobus islandicus).